We begin with the raw amino-acid sequence, 458 residues long: UDP-N-acetylmuramate--L-alanine ligase (458 aa).

Residue 118–124 (GTHGKTT) coordinates ATP.

The protein belongs to the MurCDEF family.

Its subcellular location is the cytoplasm. It carries out the reaction UDP-N-acetyl-alpha-D-muramate + L-alanine + ATP = UDP-N-acetyl-alpha-D-muramoyl-L-alanine + ADP + phosphate + H(+). Its pathway is cell wall biogenesis; peptidoglycan biosynthesis. Cell wall formation. In Clostridium botulinum (strain ATCC 19397 / Type A), this protein is UDP-N-acetylmuramate--L-alanine ligase.